Consider the following 165-residue polypeptide: uncharacterized protein (165 aa).

It belongs to the SixA phosphatase family.

This is an uncharacterized protein from Picosynechococcus sp. (strain ATCC 27264 / PCC 7002 / PR-6) (Agmenellum quadruplicatum).